The following is a 202-amino-acid chain: MTPLLAAGWPALIAALVLGYACGAIPFGLILTKVAGLGDVRTIGSGNIGATNVLRTGRKGLAAATLLCDALKGTLPVLAAGQWGEGPALAAGLGAFLGHLFPVWLGFKGGKGVATFIGVLLALSPLTLAAFAAIWLGLAFALKYSSLAALAASAATPVILWALGHGGVAALFLVLAALLWWKHAPNIRRLAAGTEGRIGQKG.

4 helical membrane passes run 11–31 (ALIA…GLIL), 87–107 (PALA…WLGF), 116–136 (FIGV…AIWL), and 158–178 (VILW…LAAL).

It belongs to the PlsY family. As to quaternary structure, probably interacts with PlsX.

It localises to the cell inner membrane. The enzyme catalyses an acyl phosphate + sn-glycerol 3-phosphate = a 1-acyl-sn-glycero-3-phosphate + phosphate. Its pathway is lipid metabolism; phospholipid metabolism. In terms of biological role, catalyzes the transfer of an acyl group from acyl-phosphate (acyl-PO(4)) to glycerol-3-phosphate (G3P) to form lysophosphatidic acid (LPA). This enzyme utilizes acyl-phosphate as fatty acyl donor, but not acyl-CoA or acyl-ACP. In Methylorubrum populi (strain ATCC BAA-705 / NCIMB 13946 / BJ001) (Methylobacterium populi), this protein is Glycerol-3-phosphate acyltransferase.